Here is a 69-residue protein sequence, read N- to C-terminus: Large ribosomal subunit protein uL29 (69 aa).

The protein belongs to the universal ribosomal protein uL29 family.

The protein is Large ribosomal subunit protein uL29 of Carboxydothermus hydrogenoformans (strain ATCC BAA-161 / DSM 6008 / Z-2901).